The following is a 346-amino-acid chain: MVLVHVGYLVLPVFGSVRNRGAPFQRSQHPHATSCRHFHLGPPQPQQLAPDFPLAHPVQSQPGLSAHMAPAHQHSGALHQSLTPLPTLQFQDVTGPSFLPQALHQQYLLQQQLLEAQHRRLVSHPRRSQERVSVHPHRLHPSFDFGQLQTPQPRYLAEGTDWDLSVDAGLSPAQFQVRPIPQHYQHYLATPRMHHFPRNSSSTQMVVHEIRNYPYPQLHFLALQGLNPSRHTSAVRESYEELLQLEDRLGNVTRGAVQNTIERFTFPHKYKKRRPQDGKGKKDEGEESDTDEKCTICLSMLEDGEDVRRLPCMHLFHQLCVDQWLAMSKKCPICRVDIETQLGADS.

Disordered stretches follow at residues 23-76 and 267-288; these read PFQR…QHSG and PHKY…GEES. The segment at 266–268 is ubiquitin binding; sequence FPH. A compositionally biased stretch (basic and acidic residues) spans 275 to 284; it reads PQDGKGKKDE. Positions 294 and 297 each coordinate Zn(2+). Residues 294 to 335 form an RING-type; atypical zinc finger; the sequence is CTICLSMLEDGEDVRRLPCMHLFHQLCVDQWLAMSKKCPICR. The interval 309 to 313 is ubiquitin binding; that stretch reads RLPCM. Positions 317 and 320 each coordinate Zn(2+).

Belongs to the Arkadia family. In terms of assembly, monomer; binding to the ubiquitin-conjugating enzyme E2 does not trigger homodimerization.

It localises to the nucleus. It carries out the reaction S-ubiquitinyl-[E2 ubiquitin-conjugating enzyme]-L-cysteine + [acceptor protein]-L-lysine = [E2 ubiquitin-conjugating enzyme]-L-cysteine + N(6)-ubiquitinyl-[acceptor protein]-L-lysine.. Its activity is regulated as follows. Binds free ubiquitin non-covalently via its RING-type zinc finger. Ubiquitin-binding leads to enhance the E3 ubiquitin-protein ligase activity by stabilizing the ubiquitin-conjugating enzyme E2 (donor ubiquitin) in the 'closed' conformation and activating ubiquitin transfer. Functionally, E3 ubiquitin-protein ligase that acts as a regulator of motor axon elongation. Required for efficient motor axon extension in the dorsal forelimb by enhancing the transcriptional responses of the SMAD1/SMAD5/SMAD8 effectors, which are activated downstream of BMP. Acts by mediating ubiquitination and degradation of SMAD inhibitors such as SMAD6, SMAD7, SKI and SNON isoform of SKIL. The sequence is that of E3 ubiquitin-protein ligase ARK2C from Homo sapiens (Human).